The following is a 2148-amino-acid chain: General transcription factor 3C polypeptide 1 (2148 aa).

Positions glycine 473–serine 487 are enriched in acidic residues. 2 disordered regions span residues glycine 473–histidine 568 and asparagine 587–lysine 609. The span at glycine 491–serine 502 shows a compositional bias: basic residues. Lysine 533 is covalently cross-linked (Glycyl lysine isopeptide (Lys-Gly) (interchain with G-Cter in SUMO2)). A Phosphoserine modification is found at serine 666. Disordered stretches follow at residues serine 717 to glycine 771 and threonine 818 to glutamate 863. 2 stretches are compositionally biased toward basic and acidic residues: residues glutamate 759–methionine 770 and histidine 825–proline 835. Residues lysine 769 and lysine 832 each participate in a glycyl lysine isopeptide (Lys-Gly) (interchain with G-Cter in SUMO2) cross-link. Position 1062 is a phosphoserine (serine 1062). The span at glutamate 1186–threonine 1195 shows a compositional bias: basic and acidic residues. Disordered regions lie at residues glutamate 1186–arginine 1238, lysine 1597–valine 1627, lysine 1823–lysine 1881, serine 1893–glycine 1928, and proline 2127–arginine 2148. The residue at position 1195 (threonine 1195) is a Phosphothreonine. A compositionally biased stretch (basic residues) spans arginine 1198–lysine 1214. The span at glutamate 1228–arginine 1238 shows a compositional bias: basic and acidic residues. The span at leucine 1605–glutamate 1616 shows a compositional bias: acidic residues. Residues serine 1624, serine 1853, and serine 1893 each carry the phosphoserine modification. Residues glutamate 1903–glutamate 1912 show a composition bias toward low complexity. Over residues serine 2132 to arginine 2148 the composition is skewed to polar residues.

It belongs to the TFIIIC subunit 1 family. As to quaternary structure, part of the TFIIIC subcomplex TFIIIC2, consisting of six subunits, GTF3C1, GTF3C2, GTF3C3, GTF3C4, GTF3C5 and GTF3C6. Interacts with IGHMBP2. Interacts with MAF1.

The protein localises to the nucleus. Required for RNA polymerase III-mediated transcription. Component of TFIIIC that initiates transcription complex assembly on tRNA and is required for transcription of 5S rRNA and other stable nuclear and cytoplasmic RNAs. Binds to the box B promoter element. The chain is General transcription factor 3C polypeptide 1 (Gtf3c1) from Rattus norvegicus (Rat).